A 469-amino-acid polypeptide reads, in one-letter code: Glutamine synthetase (469 aa).

A GS beta-grasp domain is found at 13 to 97 (NEVKFVDLRF…IRCDILEPAT (85 aa)). The 365-residue stretch at 105–469 (PRSIAKRAEE…PLEFELYYSV (365 aa)) folds into the GS catalytic domain. 2 residues coordinate Mg(2+): glutamate 130 and glutamate 132. Position 208 (glutamate 208) interacts with ATP. The Mg(2+) site is built by glutamate 213 and glutamate 221. Residues 265 to 266 (NG) and glycine 266 each bind L-glutamate. Histidine 270 is a Mg(2+) binding site. Residues 272-274 (HQS) and serine 274 contribute to the ATP site. L-glutamate contacts are provided by arginine 322, glutamate 328, and arginine 340. ATP is bound by residues arginine 340, arginine 345, and lysine 353. Mg(2+) is bound at residue glutamate 358. L-glutamate is bound at residue arginine 360. O-AMP-tyrosine is present on tyrosine 398.

The protein belongs to the glutamine synthetase family. Oligomer of 12 subunits arranged in the form of two hexameric ring. Mg(2+) is required as a cofactor.

The protein resides in the cytoplasm. The catalysed reaction is L-glutamate + NH4(+) + ATP = L-glutamine + ADP + phosphate + H(+). With respect to regulation, the activity of this enzyme could be controlled by adenylation under conditions of abundant glutamine. In terms of biological role, catalyzes the ATP-dependent biosynthesis of glutamine from glutamate and ammonia. This is Glutamine synthetase (glnAv) from Vibrio cholerae serotype O1 (strain ATCC 39315 / El Tor Inaba N16961).